Reading from the N-terminus, the 505-residue chain is Protein FAM114A2 (505 aa).

Positions 1-65 (MSDKDDIETP…KPSSDLETSK (65 aa)) are disordered. A compositionally biased stretch (basic and acidic residues) spans 51-63 (KRPETKPSSDLET). Phosphoserine is present on residues S87, S146, and S209. Residues 268 to 295 (LNSLSGEELETLKVELEQLKETFSLAEF) are a coiled coil. The disordered stretch occupies residues 342–366 (KSLTKPLAENEEGEKQSEAENTEQV).

This sequence belongs to the FAM114 family.

This Homo sapiens (Human) protein is Protein FAM114A2 (FAM114A2).